A 135-amino-acid polypeptide reads, in one-letter code: C-type Lectin CRL (135 aa).

Disulfide bonds link Cys-3–Cys-14, Cys-31–Cys-131, Cys-38–Cys-133, and Cys-106–Cys-123. In terms of domain architecture, C-type lectin spans 10–132 (MNGLCYKIFN…CESKDAFLCQ (123 aa)). 5 residues coordinate Ca(2+): Gln-96, Asp-98, Glu-104, Asn-119, and Asp-120. The short motif at 96-98 (QPD) is the Galactose-binding element.

Belongs to the true venom lectin family. As to quaternary structure, homodimer; disulfide-linked. In terms of tissue distribution, expressed by the venom gland.

The protein localises to the secreted. Beta-galactoside and N-acetylgalactosamine (GalNAc) specific C-type lectin. The protein is C-type Lectin CRL of Crotalus ruber ruber (Red diamond rattlesnake).